The following is a 129-amino-acid chain: Chromatin accessibility complex protein 1 (129 aa).

The residue at position 2 (alanine 2) is an N-acetylalanine. The residue at position 102 (lysine 102) is an N6-acetyllysine. Residues 104–120 are a coiled coil; sequence LKMLKEKREEEEDNEDD. A disordered region spans residues 109–129; it reads EKREEEEDNEDDGSDLGEALA. Residues 112-123 show a composition bias toward acidic residues; sequence EEEEDNEDDGSD. Serine 122 carries the post-translational modification Phosphoserine.

Heterodimer with POLE3; binds to DNA. Component of the CHRAC ISWI chromatin remodeling complex at least composed of SMARCA5/SNF2H, BAZ1A/ACF1, CHRAC1 and POLE3; the complex preferentially binds DNA through the CHRAC1-POLE3 heterodimer and possesses ATP-dependent nucleosome-remodeling activity. Within the complex, the heterodimer with POLE3 interacts with SMARCA5/SNF2H; the interaction is direct and enhances nucleosome sliding activity by the SMARCA5/SNF2H and BAZ1A/ACF1 interaction. Within the complex, the heterodimer with POLE3 interacts with BAZ1A/ACF1; the interactions are direct. Ubiquitously expressed.

It is found in the nucleus. Forms a complex with DNA polymerase epsilon subunit POLE3 and binds naked DNA, which is then incorporated into chromatin, aided by the nucleosome remodeling activity of ISWI/SNF2H and ACF1. Does not enhance nucleosome sliding activity of the ACF-5 ISWI chromatin remodeling complex. This Mus musculus (Mouse) protein is Chromatin accessibility complex protein 1 (Chrac1).